The sequence spans 299 residues: Acetylglutamate kinase (299 aa).

Substrate contacts are provided by residues 70–71, R92, and N186; that span reads GG.

The protein belongs to the acetylglutamate kinase family. ArgB subfamily.

The protein resides in the cytoplasm. The enzyme catalyses N-acetyl-L-glutamate + ATP = N-acetyl-L-glutamyl 5-phosphate + ADP. It participates in amino-acid biosynthesis; L-arginine biosynthesis; N(2)-acetyl-L-ornithine from L-glutamate: step 2/4. Catalyzes the ATP-dependent phosphorylation of N-acetyl-L-glutamate. The sequence is that of Acetylglutamate kinase from Caldanaerobacter subterraneus subsp. tengcongensis (strain DSM 15242 / JCM 11007 / NBRC 100824 / MB4) (Thermoanaerobacter tengcongensis).